The sequence spans 383 residues: Glycoprotein gp2 (383 aa).

The first 25 residues, 1-25, serve as a signal peptide directing secretion; the sequence is MGFIYARKLLLCMAVSIYAIGSTTT. Residues 24-75 are compositionally biased toward low complexity; sequence TTTETTTSSSSTSGSGQSTSSGTTNSSSSPTTSPPTTSSSPPTSTHTSSPST. A disordered region spans residues 24–136; it reads TTTETTTSSS…RNNSIEIVPQ (113 aa). Residue N48 is glycosylated (N-linked (GlcNAc...) asparagine; by host). Residues 81 to 91 are compositionally biased toward basic residues; it reads HAGHHRGRAGG. N-linked (GlcNAc...) asparagine; by host glycosylation occurs at N128. The chain crosses the membrane as a helical span at residues 354-371; that stretch reads LVAATTLTVTILCLLCCL.

It is found in the virion membrane. In terms of biological role, the glycoprotein gp2 from the avirulent strain Kentucky A (KyA) is probably non functional since this strain harbors an in-frame deletion of 1,242 nucleotides in gene 71. This Equus caballus (Horse) protein is Glycoprotein gp2 (US4).